The sequence spans 229 residues: ATP-dependent dethiobiotin synthetase BioD (229 aa).

12-17 (GVGKTV) serves as a coordination point for ATP. Residue T16 coordinates Mg(2+). The active site involves K37. T41 is a substrate binding site. Residues D53, 112–115 (EGAG), and 201–203 (PAG) contribute to the ATP site. The Mg(2+) site is built by D53 and E112.

It belongs to the dethiobiotin synthetase family. In terms of assembly, homodimer. Requires Mg(2+) as cofactor.

It localises to the cytoplasm. The catalysed reaction is (7R,8S)-7,8-diammoniononanoate + CO2 + ATP = (4R,5S)-dethiobiotin + ADP + phosphate + 3 H(+). It functions in the pathway cofactor biosynthesis; biotin biosynthesis; biotin from 7,8-diaminononanoate: step 1/2. Catalyzes a mechanistically unusual reaction, the ATP-dependent insertion of CO2 between the N7 and N8 nitrogen atoms of 7,8-diaminopelargonic acid (DAPA, also called 7,8-diammoniononanoate) to form a ureido ring. The protein is ATP-dependent dethiobiotin synthetase BioD of Mycobacterium sp. (strain JLS).